The primary structure comprises 307 residues: Quinolinate synthase (307 aa).

Iminosuccinate is bound by residues H20 and S37. C82 is a [4Fe-4S] cluster binding site. Residues 108 to 110 and S125 contribute to the iminosuccinate site; that span reads YIN. Residue C168 coordinates [4Fe-4S] cluster. Iminosuccinate-binding positions include 194–196 and T219; that span reads HPE. C264 serves as a coordination point for [4Fe-4S] cluster.

This sequence belongs to the quinolinate synthase family. Type 2 subfamily. Requires [4Fe-4S] cluster as cofactor.

The protein localises to the cytoplasm. It catalyses the reaction iminosuccinate + dihydroxyacetone phosphate = quinolinate + phosphate + 2 H2O + H(+). Its pathway is cofactor biosynthesis; NAD(+) biosynthesis; quinolinate from iminoaspartate: step 1/1. Catalyzes the condensation of iminoaspartate with dihydroxyacetone phosphate to form quinolinate. In Pyrobaculum aerophilum (strain ATCC 51768 / DSM 7523 / JCM 9630 / CIP 104966 / NBRC 100827 / IM2), this protein is Quinolinate synthase.